Reading from the N-terminus, the 160-residue chain is Ureidoglycolate lyase (160 aa).

The protein belongs to the ureidoglycolate lyase family. In terms of assembly, homodimer. It depends on Ni(2+) as a cofactor.

The catalysed reaction is (S)-ureidoglycolate = urea + glyoxylate. It participates in nitrogen metabolism; (S)-allantoin degradation. In terms of biological role, catalyzes the catabolism of the allantoin degradation intermediate (S)-ureidoglycolate, generating urea and glyoxylate. Involved in the utilization of allantoin as nitrogen source. The protein is Ureidoglycolate lyase of Salmonella gallinarum (strain 287/91 / NCTC 13346).